We begin with the raw amino-acid sequence, 432 residues long: Tubulin-specific chaperone cofactor E-like protein (432 aa).

LRR repeat units lie at residues 69–94 (ASHV…ILKN), 95–117 (LPHL…HELP), 118–140 (VSTL…QSFL), 143–167 (LPKV…EPIS), 168–191 (TTVR…NVVK), 193–217 (FPNV…HFEQ), and 218–242 (LPFW…QLNR). Residues 254 to 295 (IPLLDALTNEERLHLIIGRLHHLRVLNGSKISSEQREQSERF) form an LRRCT region. Residues 324 to 415 (VTIDLTPKKE…GDSFLVQEKI (92 aa)) form a ubiquitin-like (UBL) region.

It localises to the cytoplasm. It is found in the cytoskeleton. Its function is as follows. Acts as a regulator of tubulin stability. Involved in microtubule-dependent neuronal function. May be involved in tubulin acetylation/deacetylation pathway. This chain is Tubulin-specific chaperone cofactor E-like protein, found in Caenorhabditis elegans.